We begin with the raw amino-acid sequence, 922 residues long: Cell surface glycoprotein 2 (922 aa).

The first 23 residues, 1–23, serve as a signal peptide directing secretion; it reads MTGNSDKVRSLFLTALMVFSVFA. N37, N56, N110, N220, N251, N262, and N292 each carry an N-linked (GlcNAc...) asparagine glycan. N307 carries N-linked (GalNAc...) asparagine glycosylation. N319, N344, N396, N437, N490, N523, N557, N574, N587, N616, N700, N717, N809, N838, and N847 each carry an N-linked (GlcNAc...) asparagine glycan. Residues 816 to 899 are disordered; sequence PHQDTNGNEE…GTETTEAEGP (84 aa). Residues 835 to 850 show a composition bias toward polar residues; sequence YTQNGSAVTDSANVTV. Residues 853 to 887 show a composition bias toward acidic residues; that stretch reads EEPEDTPEDTPEDTPEDTPEDTPEDTPADTPEDTP. The span at 888-899 shows a compositional bias: low complexity; the sequence is DTGTETTEAEGP. Residues 898-918 traverse the membrane as a helical segment; the sequence is GPGFTAAIALIALVAAALLAV. Residues 899-901 carry the PGF sorting signal motif; that stretch reads PGF.

This sequence belongs to the halobacterial S-layer protein family. Post-translationally, N-glycosylated on Asn-307; this N-linked glycan is a branched trisaccharide containing 2-amino-6-sulfo-2,6-dideoxy-glucose (sulfoquinovosamine). O-glycosylated on Thr residues within the DTPE repeats in the C-terminal region; glycans consist of Glc-Gal disaccharides. In terms of processing, cleaved by the archaeosortase ArtA at the C-terminus, with removal of a short hydrophobic segment. Post-translationally, lipidation.

It localises to the secreted. The protein resides in the cell wall. The protein localises to the S-layer. Its subcellular location is the cell membrane. Functionally, S-layer protein. The S-layer is a paracrystalline mono-layered assembly of proteins which coat the surface of the cell. In H.hispanica, the S-layer contains two different glycoproteins, Slg1 and Slg2, which share highly similar amino acid sequences. This Haloarcula hispanica (strain ATCC 33960 / DSM 4426 / JCM 8911 / NBRC 102182 / NCIMB 2187 / VKM B-1755) protein is Cell surface glycoprotein 2.